The chain runs to 691 residues: Ribonucleoprotein PTB-binding 2 (691 aa).

Residues 1–30 (MAAAAGDGGGEGGAGLGSAAGLGPGPGLRG) show a composition bias toward gly residues. A disordered region spans residues 1 to 47 (MAAAAGDGGGEGGAGLGSAAGLGPGPGLRGQGPSAEAHEGAPDPMPA). An N-acetylalanine modification is found at alanine 2. RRM domains lie at 69 to 140 (RKIL…LQPT), 142 to 220 (ALLC…WMDV), and 231 to 309 (KCLC…FCAP). Disordered regions lie at residues 492–522 (PNQH…EGNF) and 543–574 (GHHK…GEPP). Residues 548–569 (QQSQPKGTEISSGAASKNQTSL) are compositionally biased toward polar residues.

In terms of assembly, interacts with PTBP1 and RAVER1.

The protein resides in the nucleus. Its subcellular location is the cytoplasm. Functionally, may bind single-stranded nucleic acids. The sequence is that of Ribonucleoprotein PTB-binding 2 (RAVER2) from Homo sapiens (Human).